The following is a 393-amino-acid chain: Methylthioribose kinase (393 aa).

ATP is bound by residues N38, K53, and 107 to 109; that span reads EDL. D225 provides a ligand contact to substrate. 242–244 lines the ATP pocket; it reads DPE. R332 lines the substrate pocket.

Belongs to the methylthioribose kinase family. In terms of assembly, homodimer.

The enzyme catalyses 5-(methylsulfanyl)-D-ribose + ATP = 5-(methylsulfanyl)-alpha-D-ribose 1-phosphate + ADP + H(+). The protein operates within amino-acid biosynthesis; L-methionine biosynthesis via salvage pathway; S-methyl-5-thio-alpha-D-ribose 1-phosphate from S-methyl-5'-thioadenosine (hydrolase route): step 2/2. Functionally, catalyzes the phosphorylation of methylthioribose into methylthioribose-1-phosphate. This Bacillus cereus (strain AH187) protein is Methylthioribose kinase.